Here is a 414-residue protein sequence, read N- to C-terminus: 3-oxoacyl-[acyl-carrier-protein] synthase 2 (414 aa).

The 411-residue stretch at 3–413 folds into the Ketosynthase family 3 (KS3) domain; it reads KRRVVVTGMG…GTNGSLIFKR (411 aa). Active-site for beta-ketoacyl synthase activity residues include cysteine 164, histidine 304, and histidine 342.

The protein belongs to the thiolase-like superfamily. Beta-ketoacyl-ACP synthases family. In terms of assembly, homodimer.

The enzyme catalyses a fatty acyl-[ACP] + malonyl-[ACP] + H(+) = a 3-oxoacyl-[ACP] + holo-[ACP] + CO2. It carries out the reaction (9Z)-hexadecenoyl-[ACP] + malonyl-[ACP] + H(+) = 3-oxo-(11Z)-octadecenoyl-[ACP] + holo-[ACP] + CO2. The protein operates within lipid metabolism; fatty acid biosynthesis. Functionally, involved in the type II fatty acid elongation cycle. Catalyzes the elongation of a wide range of acyl-ACP by the addition of two carbons from malonyl-ACP to an acyl acceptor. Can efficiently catalyze the conversion of palmitoleoyl-ACP (cis-hexadec-9-enoyl-ACP) to cis-vaccenoyl-ACP (cis-octadec-11-enoyl-ACP), an essential step in the thermal regulation of fatty acid composition. In Vibrio cholerae serotype O1 (strain ATCC 39315 / El Tor Inaba N16961), this protein is 3-oxoacyl-[acyl-carrier-protein] synthase 2 (fabF).